Consider the following 95-residue polypeptide: Small ribosomal subunit protein bS6 (95 aa).

This sequence belongs to the bacterial ribosomal protein bS6 family.

Binds together with bS18 to 16S ribosomal RNA. This is Small ribosomal subunit protein bS6 from Aster yellows witches'-broom phytoplasma (strain AYWB).